Here is a 214-residue protein sequence, read N- to C-terminus: UPF0301 protein NFA_55110 (214 aa).

Residues 1–24 (MARADDPDERKTQGGHGDRRRREF) are disordered.

This sequence belongs to the UPF0301 (AlgH) family.

This Nocardia farcinica (strain IFM 10152) protein is UPF0301 protein NFA_55110.